Here is a 427-residue protein sequence, read N- to C-terminus: MASFPESVNENDIDKAKFIGELLVPMAPFDQKAGREAWTVAFAPDGSYFAWSQGHRIVRLIPWAKCLSSFSVRHGGEVTNPTSPRHLSRQSCKGGSVIPMAGAPPEHTIDCGGIVWGMAFGSSVPEKQSRSINIEWHHFQFGRDQLLLATGLNNGRIKIWDVYTGTLLLNLMDHTDIVRDLTFAPDGSLMLVSASTDKKLRVWDLKDDGNMVKVLWGHPNRVYSSAFSPDSSVLCSVGASKAVLLWNMDKYTLIRKLEGHHNDVVSCEFSPDGALLATASYDTRVIVWDHQRGSILLELGHLFPPPSPIFAGGANDRWVRSVSFCADGRHIASVSDDRLVRFWSIEERAPQAVASLPNGLCCAFSTTGSVLAAGTCDGSVHFWECPRSIASLQHLCRMALRRVKTTQQVEALPVPMPLRDFLTYRVV.

WD repeat units lie at residues 129-170 (SRSI…LLLN), 173-213 (DHTD…NMVK), 217-256 (GHPN…LIRK), 259-298 (GHHN…ILLE), and 314-353 (ANDR…PQAV). Positions 379 to 427 (SVHFWECPRSIASLQHLCRMALRRVKTTQQVEALPVPMPLRDFLTYRVV) constitute an SOCS box domain.

As to quaternary structure, component of a probable ECS E3 ubiquitin-protein ligase complex that contains the Elongin BC complex.

It functions in the pathway protein modification; protein ubiquitination. Probable substrate-recognition component of a SCF-like ECS (Elongin-Cullin-SOCS-box protein) E3 ubiquitin-protein ligase complex which mediates the ubiquitination and subsequent proteasomal degradation of target proteins. This chain is WD repeat and SOCS box-containing protein 1 (wsb1), found in Takifugu rubripes (Japanese pufferfish).